We begin with the raw amino-acid sequence, 219 residues long: Large ribosomal subunit protein mL67 (219 aa).

The protein belongs to the mitochondrion-specific ribosomal protein mL67 family.

The protein resides in the nucleus. Its subcellular location is the mitochondrion. Its function is as follows. Transcription factor involved in regulation of RNA polymerase II-dependent transcription. Also involved in regulation of mitochondrial DNA recombination, maintenance and repair, and generation of homoplasmic cells. The polypeptide is Large ribosomal subunit protein mL67 (MHR1) (Kluyveromyces lactis (strain ATCC 8585 / CBS 2359 / DSM 70799 / NBRC 1267 / NRRL Y-1140 / WM37) (Yeast)).